The following is an 88-amino-acid chain: Putative septation protein SpoVG (88 aa).

It belongs to the SpoVG family.

Functionally, could be involved in septation. In Lachnospira eligens (strain ATCC 27750 / DSM 3376 / VPI C15-48 / C15-B4) (Eubacterium eligens), this protein is Putative septation protein SpoVG.